Here is a 305-residue protein sequence, read N- to C-terminus: MKYLEIAVEVESCFTETVADIFWEFNTGGVSIEDPLLLWQYINAQIWDAYEFPDSVLKAERATVRAYFPLTENINTLLSQINERLKSLGIPFNLYFQEVDEESWANSWKKYFKPVEVGEFLIKPTWEKLPSGKEDKKIIEIDPGMAFGTGTHVTTALVLEALPKYVSPGKVVVDVGTGSGILAIASALLGAEKIYALDIDPVAVKVARENISINRLEDKITVIENDLLHGFNQTVDVIIANIIAAVIKELALDAYEKLATGGIFIGSGIIVEREKEVMDKLLEVGFKIIERKNSGGWCLLVARKE.

Residues T155, G176, D198, and N241 each coordinate S-adenosyl-L-methionine.

Belongs to the methyltransferase superfamily. PrmA family.

The protein resides in the cytoplasm. The enzyme catalyses L-lysyl-[protein] + 3 S-adenosyl-L-methionine = N(6),N(6),N(6)-trimethyl-L-lysyl-[protein] + 3 S-adenosyl-L-homocysteine + 3 H(+). Its function is as follows. Methylates ribosomal protein L11. This Carboxydothermus hydrogenoformans (strain ATCC BAA-161 / DSM 6008 / Z-2901) protein is Ribosomal protein L11 methyltransferase.